A 414-amino-acid polypeptide reads, in one-letter code: Nucleoredoxin (414 aa).

The 175-residue stretch at 131–305 (LLVKDDPEGL…ELNAVQLNEG (175 aa)) folds into the Thioredoxin domain.

Belongs to the nucleoredoxin family.

It is found in the cytoplasm. The protein resides in the cytosol. The protein localises to the nucleus. The catalysed reaction is [protein]-dithiol + NAD(+) = [protein]-disulfide + NADH + H(+). It carries out the reaction [protein]-dithiol + NADP(+) = [protein]-disulfide + NADPH + H(+). In terms of biological role, functions as a redox-dependent negative regulator of the Wnt signaling pathway. This Xenopus laevis (African clawed frog) protein is Nucleoredoxin (nxn).